The following is a 669-amino-acid chain: UvrABC system protein B (669 aa).

In terms of domain architecture, Helicase ATP-binding spans 27–414; that stretch reads ESLQGEHKFQ…EARVIEQVIR (388 aa). ATP is bound at residue 40-47; the sequence is GATGTGKT. A Beta-hairpin motif is present at residues 93 to 116; sequence YYDYYQPEAYIPVTDTYIEKTASI. A Helicase C-terminal domain is found at 431 to 597; that stretch reads QVDDLYGEIQ…PINKRANNAI (167 aa). Residues 628–663 enclose the UVR domain; sequence PDLIQQLEEKMQEAAKKQEFEVAAIYRDRIQHLRDR.

The protein belongs to the UvrB family. In terms of assembly, forms a heterotetramer with UvrA during the search for lesions. Interacts with UvrC in an incision complex.

The protein resides in the cytoplasm. In terms of biological role, the UvrABC repair system catalyzes the recognition and processing of DNA lesions. A damage recognition complex composed of 2 UvrA and 2 UvrB subunits scans DNA for abnormalities. Upon binding of the UvrA(2)B(2) complex to a putative damaged site, the DNA wraps around one UvrB monomer. DNA wrap is dependent on ATP binding by UvrB and probably causes local melting of the DNA helix, facilitating insertion of UvrB beta-hairpin between the DNA strands. Then UvrB probes one DNA strand for the presence of a lesion. If a lesion is found the UvrA subunits dissociate and the UvrB-DNA preincision complex is formed. This complex is subsequently bound by UvrC and the second UvrB is released. If no lesion is found, the DNA wraps around the other UvrB subunit that will check the other stand for damage. In Synechocystis sp. (strain ATCC 27184 / PCC 6803 / Kazusa), this protein is UvrABC system protein B.